The primary structure comprises 160 residues: MPPMLSGLLARLVKLLLGRHGSALHWRAAGAATVLLVIVLLAGSYLAVLAERGAPGAQLITYPRALWWSVETATTVGYGDLYPVTLWGRLVAVVVMVAGITSFGLVTAALATWFVGREQERRGHFVRHSEKAAEEAYTRTTRALHERFDRLERMLDDNRR.

At 1–27 (MPPMLSGLLARLVKLLLGRHGSALHWR) the chain is on the cytoplasmic side. Residues 28-50 (AAGAATVLLVIVLLAGSYLAVLA) traverse the membrane as a helical segment. Residues 51–61 (ERGAPGAQLIT) are Extracellular-facing. The helical; Pore-forming intramembrane region spans 62 to 72 (YPRALWWSVET). Residues 73 to 80 (ATTVGYGD) constitute an intramembrane region (pore-forming). Residues 75 to 80 (TVGYGD) carry the Selectivity filter motif. Residues 81-87 (LYPVTLW) are Extracellular-facing. The helical transmembrane segment at 88–111 (GRLVAVVVMVAGITSFGLVTAALA) threads the bilayer. The Cytoplasmic portion of the chain corresponds to 112 to 160 (TWFVGREQERRGHFVRHSEKAAEEAYTRTTRALHERFDRLERMLDDNRR).

Belongs to the potassium channel family. Homotetramer.

The protein resides in the cell membrane. Its function is as follows. Acts as a pH-gated potassium ion channel; changing the cytosolic pH from 7 to 4 opens the channel. This chain is pH-gated potassium channel KcsA (kcsA), found in Streptomyces coelicolor (strain ATCC BAA-471 / A3(2) / M145).